Reading from the N-terminus, the 429-residue chain is MHNIFLLSLGCSKNTVDSERLMAQAAASGMIFTEFADDADIILINTCGFIQDAKEESIAETLAAIRKKQDEKVRKVYVMGCLPELYRKELADEMPEIDGFFGTRELPDVLRAIGAEYREELLDRRILLTPPHYAFLKIAEGCNRQCSFCSIPKIRGRYVSQPPEQLLREAALLRQSGVRELNLIAQDISVYGCDLDGSSLLNDLVLRLSDMEFERIRLLYAYPLNFPMEVIDTMRERENVCNYLDMPLQHISDRILRSMNRGIDSTGTVRLIESIRQRNPDIRLRTTMIAGYPGETGEEFEELLQFVAETRFDRLGCFPYSHEEHSPAYRLEDDVIPEKKQDRVAELMELQETISQEKNREFEGNEIVVLVDQVEENMVFGRTEYDAPEVDNECILETGNFDVRPGMFCRARITDSTPYDLEGEVIGIG.

An MTTase N-terminal domain is found at 2–118; sequence HNIFLLSLGC…VLRAIGAEYR (117 aa). Residues cysteine 11, cysteine 47, cysteine 81, cysteine 142, cysteine 146, and cysteine 149 each coordinate [4Fe-4S] cluster. In terms of domain architecture, Radical SAM core spans 128-357; that stretch reads LTPPHYAFLK…MELQETISQE (230 aa). Residues 360–427 enclose the TRAM domain; the sequence is REFEGNEIVV…PYDLEGEVIG (68 aa).

It belongs to the methylthiotransferase family. RimO subfamily. Requires [4Fe-4S] cluster as cofactor.

It localises to the cytoplasm. It catalyses the reaction L-aspartate(89)-[ribosomal protein uS12]-hydrogen + (sulfur carrier)-SH + AH2 + 2 S-adenosyl-L-methionine = 3-methylsulfanyl-L-aspartate(89)-[ribosomal protein uS12]-hydrogen + (sulfur carrier)-H + 5'-deoxyadenosine + L-methionine + A + S-adenosyl-L-homocysteine + 2 H(+). Catalyzes the methylthiolation of an aspartic acid residue of ribosomal protein uS12. This chain is Ribosomal protein uS12 methylthiotransferase RimO, found in Chlorobium limicola (strain DSM 245 / NBRC 103803 / 6330).